The primary structure comprises 206 residues: IMPACT family member HI_0722 (206 aa).

The protein belongs to the IMPACT family.

The protein is IMPACT family member HI_0722 of Haemophilus influenzae (strain ATCC 51907 / DSM 11121 / KW20 / Rd).